Reading from the N-terminus, the 1414-residue chain is DNA-directed RNA polymerase subunit beta' (1414 aa).

The Zn(2+) site is built by cysteine 70, cysteine 72, cysteine 85, and cysteine 88. Aspartate 460, aspartate 462, and aspartate 464 together coordinate Mg(2+). Zn(2+) is bound by residues cysteine 814, cysteine 888, cysteine 895, and cysteine 898. A compositionally biased stretch (low complexity) spans 1392–1403 (EQALSEALKSSA). Residues 1392-1414 (EQALSEALKSSAPQEAKAAQKDE) are disordered.

It belongs to the RNA polymerase beta' chain family. As to quaternary structure, the RNAP catalytic core consists of 2 alpha, 1 beta, 1 beta' and 1 omega subunit. When a sigma factor is associated with the core the holoenzyme is formed, which can initiate transcription. It depends on Mg(2+) as a cofactor. Requires Zn(2+) as cofactor.

It catalyses the reaction RNA(n) + a ribonucleoside 5'-triphosphate = RNA(n+1) + diphosphate. In terms of biological role, DNA-dependent RNA polymerase catalyzes the transcription of DNA into RNA using the four ribonucleoside triphosphates as substrates. This chain is DNA-directed RNA polymerase subunit beta', found in Coxiella burnetii (strain RSA 331 / Henzerling II).